Here is a 259-residue protein sequence, read N- to C-terminus: Thiazole synthase (259 aa).

Residue lysine 95 is the Schiff-base intermediate with DXP of the active site. 1-deoxy-D-xylulose 5-phosphate-binding positions include glycine 156, 182–183 (AG), and 204–205 (AS).

The protein belongs to the ThiG family. In terms of assembly, homotetramer. Forms heterodimers with either ThiH or ThiS.

Its subcellular location is the cytoplasm. It carries out the reaction [ThiS sulfur-carrier protein]-C-terminal-Gly-aminoethanethioate + 2-iminoacetate + 1-deoxy-D-xylulose 5-phosphate = [ThiS sulfur-carrier protein]-C-terminal Gly-Gly + 2-[(2R,5Z)-2-carboxy-4-methylthiazol-5(2H)-ylidene]ethyl phosphate + 2 H2O + H(+). Its pathway is cofactor biosynthesis; thiamine diphosphate biosynthesis. Catalyzes the rearrangement of 1-deoxy-D-xylulose 5-phosphate (DXP) to produce the thiazole phosphate moiety of thiamine. Sulfur is provided by the thiocarboxylate moiety of the carrier protein ThiS. In vitro, sulfur can be provided by H(2)S. The polypeptide is Thiazole synthase (Corynebacterium efficiens (strain DSM 44549 / YS-314 / AJ 12310 / JCM 11189 / NBRC 100395)).